Here is an 857-residue protein sequence, read N- to C-terminus: Trehalose transporter 1 (857 aa).

2 disordered regions span residues 1–28 and 62–202; these read MSGRDNRGAGGGGGGHQPLSNAMGKLKE and DPFL…QKAT. Topologically, residues 1–392 are cytoplasmic; the sequence is MSGRDNRGAG…VYRPTTNPIY (392 aa). Residue Ala9 is modified to Phosphothreonine. Phosphoserine is present on Gly12. Residues 69 to 81 show a composition bias toward polar residues; sequence VSPQRHPQNTVRT. Residues 134–143 are compositionally biased toward basic and acidic residues; it reads EIREHRDRQQ. The span at 171–181 shows a compositional bias: polar residues; it reads GNSNTNSNKAA. Ser248, Ser249, and Ser250 each carry phosphoserine. Disordered regions lie at residues 249–269 and 280–299; these read SSEEEFHKTRREFQGRKHQSL and VLQGSSTDSDEEGEDAEHKR. 2 positions are modified to phosphoserine: Ser320 and Ser322. Positions 327 to 346 are disordered; it reads LTSRQHFQQQRSISTDSRKS. The span at 330-341 shows a compositional bias: polar residues; it reads RQHFQQQRSIST. Residues 393-413 traverse the membrane as a helical segment; it reads IWTQVLAALSVSLGSLVVGFV. At 414 to 440 the chain is on the extracellular side; it reads SAYTSPALVSMTDRNITSFEVTQDAGS. N-linked (GlcNAc...) asparagine glycosylation is present at Asn428. A helical membrane pass occupies residues 441-461; the sequence is WVGGIMPLAGLAGGIAGGPLI. Topologically, residues 462–473 are cytoplasmic; that stretch reads EYLGRRNTILAT. A helical membrane pass occupies residues 474–494; sequence AVPFIVSSLLIACAVNVAMVL. The Extracellular segment spans residues 495–497; that stretch reads CGR. A helical transmembrane segment spans residues 498 to 518; the sequence is FLAGFCVGIASLSLPVYLGET. Residues 519-528 are Cytoplasmic-facing; the sequence is VQPEVRGTLG. A helical transmembrane segment spans residues 529–549; the sequence is LLPTAFGNIGILLCFVAGSFM. N-linked (GlcNAc...) asparagine glycosylation occurs at Asn550. The Extracellular portion of the chain corresponds to 550 to 552; that stretch reads NWS. Residues 553–573 traverse the membrane as a helical segment; that stretch reads MLAFLGAALPVPFLILMFLIP. Topologically, residues 574–636 are cytoplasmic; that stretch reads ETPRWFVGRG…ELLKLNNLKP (63 aa). The helical transmembrane segment at 637-657 threads the bilayer; sequence LSISLGLMFFQQFSGINAVIF. At 658 to 673 the chain is on the extracellular side; it reads YTVQIFKDAGSTIDGN. A helical transmembrane segment spans residues 674–694; sequence LCTIIVGIVNFLATFIGIVLI. The Cytoplasmic segment spans residues 695 to 700; it reads DRAGRK. A helical transmembrane segment spans residues 701–721; it reads ILLYVSDIAMVLTLFVLGGFF. Residues 722–740 lie on the Extracellular side of the membrane; that stretch reads YCKTYGPDVSHLGWLPLTC. Residues 741–761 form a helical membrane-spanning segment; the sequence is FVIYILGFSLGFGPIPWLMMG. Residues 762 to 767 are Cytoplasmic-facing; that stretch reads EILPAK. Residues 768–788 form a helical membrane-spanning segment; that stretch reads IRGSAASVATAFNWFCTFVVT. Over 789–801 the chain is Extracellular; that stretch reads KTFQDLTVAMGAH. A helical membrane pass occupies residues 802–822; the sequence is GAFWLFGAICFVGLFFVIIYV. The Cytoplasmic portion of the chain corresponds to 823-857; that stretch reads PETQGKTLEDIERKMMGRVRRMSSVANIKPLSFNM. Ser845 and Ser846 each carry phosphoserine.

This sequence belongs to the major facilitator superfamily. Sugar transporter (TC 2.A.1.1) family. Trehalose transporter subfamily. Expressed in perineurial glia of the outer layer of the nervous system that forms the blood brain barrier (at protein level). Expressed in the fat body (at protein level). In terms of tissue distribution, may be specifically expressed in perineurial glia (at protein level). As to expression, may be specifically expressed in the fat body (at protein level).

The protein localises to the cell membrane. It localises to the vesicle. It catalyses the reaction alpha,alpha-trehalose(in) = alpha,alpha-trehalose(out). The enzyme catalyses D-glucose(out) = D-glucose(in). Low-capacity facilitative transporter for trehalose. Can also transport glucose. Does not transport maltose, sucrose, lactose or fructose. Mediates the bidirectional transfer of trehalose. Responsible for the transport of trehalose synthesized in the fat body and the incorporation of trehalose into other tissues that require a carbon source, thereby regulating trehalose levels in the hemolymph. Required in glial cells of the blood brain barrier to fuel glycolysis but not required in neurons. Neurons rely on the citric acid cycle for their energy needs and utilise alanine and lactate, by-products of glial cell glycolysis released into the hemolymph, as fuel. Increased expression in glial cells of the blood brain barrier during starvation and increased cell surface localization enhances carbohydrate uptake to protect the central nervous system from restricted nutrient availability. The chain is Trehalose transporter 1 from Drosophila melanogaster (Fruit fly).